A 235-amino-acid chain; its full sequence is UPF0758 protein CD630_11440 (235 aa).

One can recognise an MPN domain in the interval 113–235; that stretch reads KIMNPWDIQR…YFSFKENMII (123 aa). Residues histidine 184, histidine 186, and aspartate 197 each coordinate Zn(2+). The JAMM motif motif lies at 184–197; the sequence is HNHPSGSVEPSRED.

Belongs to the UPF0758 family.

This chain is UPF0758 protein CD630_11440, found in Clostridioides difficile (strain 630) (Peptoclostridium difficile).